A 554-amino-acid polypeptide reads, in one-letter code: Arginine--tRNA ligase (554 aa).

A 'HIGH' region motif is present at residues 130-140 (ANPTGDLHIGH).

Belongs to the class-I aminoacyl-tRNA synthetase family. In terms of assembly, monomer.

It is found in the cytoplasm. The catalysed reaction is tRNA(Arg) + L-arginine + ATP = L-arginyl-tRNA(Arg) + AMP + diphosphate. This chain is Arginine--tRNA ligase, found in Staphylococcus carnosus (strain TM300).